We begin with the raw amino-acid sequence, 495 residues long: Cyclic GMP-AMP synthase (495 aa).

Residues 1–128 are disordered; it reads MAARRGKSTR…AGATELAAPA (128 aa). The segment at 1–134 is DNA-binding; that stretch reads MAARRGKSTR…AAPARMEAPP (134 aa). Lysine 7 is modified (N6-acetyllysine). Residue serine 13 is modified to Phosphoserine. Basic and acidic residues-rich tracts occupy residues 52–76 and 105–116; these read CRRE…RAED and RAREARSARELR. At lysine 56 the chain carries N6-acetyllysine. Serine 57 bears the Phosphoserine mark. Residues 57-68 are required for association with the cell membrane; the sequence is SGPDPREKPQVR. Residues 103-134 form a required for activation upon DNA viral infection region; the sequence is SCRAREARSARELRPQAGATELAAPARMEAPP. Residues 143-148 carry the Nuclear export signal motif; the sequence is LEKVRL. Lysine 145 carries the post-translational modification N6-lactoyllysine. The interval 147–190 is DNA-binding; it reads RLSRHEISEAAEVVNWVVEHLLRRLQGGESEFKGVALLRTGSYY. A PolyADP-ribosyl glutamic acid modification is found at glutamate 165. Threonine 186 is a binding site for GTP. Residue serine 188 is modified to Phosphoserine. ATP is bound at residue serine 188. Tyrosine 190 carries the phosphotyrosine modification. Mg(2+)-binding residues include glutamate 200 and aspartate 202. Aspartate 202 lines the 2',3'-cGAMP pocket. Lysine 206 is covalently cross-linked (Glycyl lysine isopeptide (Lys-Gly) (interchain with G-Cter in SUMO)). A Glycyl lysine isopeptide (Lys-Gly) (interchain with G-Cter in ubiquitin) cross-link involves residue lysine 260. Residue glutamate 261 is modified to 5-glutamyl polyglutamate. Positions 268–278 match the Nuclear localization signal motif; the sequence is GVTVERKRRGS. Serine 278 is modified (phosphoserine). Aspartate 294 provides a ligand contact to GTP. Aspartate 294 is a binding site for Mg(2+). Aspartate 294 serves as a coordination point for 2',3'-cGAMP. The segment at 316–357 is interaction with collided ribosomes; sequence SQWLGAKVKNNLKRQPFYLVPKHAKEGSGFQEETWRLSFSHI. A Glycyl lysine isopeptide (Lys-Gly) (interchain with G-Cter in SUMO); alternate cross-link involves residue lysine 322. Lysine 322 is covalently cross-linked (Glycyl lysine isopeptide (Lys-Gly) (interchain with G-Cter in ubiquitin); alternate). Residues lysine 337 and arginine 351 each coordinate 2',3'-cGAMP. 351 to 358 is a GTP binding site; the sequence is RLSFSHIE. Glutamate 358 is a binding site for ATP. At lysine 359 the chain carries N6-acetyllysine. Residue lysine 359 forms a Glycyl lysine isopeptide (Lys-Gly) (interchain with G-Cter in SUMO); alternate linkage. Residue lysine 359 forms a Glycyl lysine isopeptide (Lys-Gly) (interchain with G-Cter in ubiquitin); alternate linkage. Residues 359-382 are DNA-binding; that stretch reads KDILKNHGQSKTCCEIDGVKCCRK. Zn(2+) is bound at residue histidine 365. Position 369 is an N6-acetyllysine (lysine 369). Residue lysine 369 forms a Glycyl lysine isopeptide (Lys-Gly) (interchain with G-Cter in SUMO) linkage. Zn(2+)-binding residues include cysteine 371, cysteine 372, and cysteine 379. 2 S-palmitoyl cysteine lipidation sites follow: cysteine 379 and cysteine 380. Glycyl lysine isopeptide (Lys-Gly) (interchain with G-Cter in ubiquitin) cross-links involve residues lysine 386, lysine 389, lysine 396, and lysine 397. The residue at position 389 (lysine 389) is an N6-acetyllysine. Lysine 389 is an ATP binding site. Serine 410 bears the Phosphoserine mark. 410–414 contacts ATP; that stretch reads SYHVK. Cysteine 449 carries S-palmitoyl cysteine lipidation. The residue at position 481 (lysine 481) is an N6-methyllysine.

Belongs to the mab-21 family. As to quaternary structure, monomer in the absence of DNA. Homodimer in presence of dsDNA: forms a 2:2 dimer with two enzymes binding to two DNA molecules. Interacts with nucleosomes; interaction is mainly mediated via histones H2A and H2B and inactivates the nucleotidyltransferase activity by blocking DNA-binding and subsequent activation. Interacts with PQBP1 (via WW domain). Interacts with TRIM14; this interaction recruits USP14, leading to deubiquitinate and stabilize CGAS and promote type I interferon production. Interacts with ZCCHC3; promoting sensing of dsDNA by CGAS. Interacts (when not monomethylated) with (poly-ADP-ribosylated) PARP1; interaction takes place in the nucleus and prevents the formation of the PARP1-TIMELESS complex. Interacts (when monomethylated) with SGF29; interaction with SGF29 prevents interaction with PARP1. Interacts with PCBP2; preventing the formation of liquid-like droplets in which CGAS is activated. Interacts with IRGM; promoting CGAS degradation. The cofactor is Mg(2+). Mn(2+) is required as a cofactor. Requires Zn(2+) as cofactor. Post-translationally, the N-terminal disordered part (1-134) is phosphorylated by AURKB during the G2-M transition, blocking CGAS liquid phase separation and preventing activation. Phosphorylation at Tyr-190 by BLK promotes cytosolic retention. Localizes into the nucleus following dephosphorylation at Tyr-190. Phosphorylation at Ser-410 activates the nucleotidyltransferase activity. Dephosphorylation at Ser-410 by PPP6C impairs its ability to bind GTP, thereby inactivating it. Phosphorylation at Ser-188 by PRKDC inhibits its cyclic GMP-AMP synthase activity by impairing homodimerization and activation. Phosphorylation at Ser-278 by AKT (AKT1, AKT2 or AKT3) suppresses the nucleotidyltransferase activity. Phosphorylation at Ser-278 by CDK1 during mitosis leads to its inhibition, thereby preventing CGAS activation by self-DNA during mitosis. Dephosphorylated at Ser-278 by protein phosphatase PP1 upon mitotic exit. In terms of processing, ubiquitinated at Lys-389 via 'Lys-48'-linked polyubiquitin chains, leading to its SQSTM1-mediated autophagic degradation. Interaction with TRIM14 promotes recruitment of USP14, leading to deubiquitinate Lys-389 and stabilize CGAS. Ubiquitinated at Lys-359 by RNF185 via 'Lys-27'-linked polyubiquitination, promoting CGAS cyclic GMP-AMP synthase activity. Monoubiquitination at Lys-322 by TRIM56 promotes oligomerization and subsequent activation. Monoubiquitination by TRIM41 promotes CGAS activation. Ubiquitination at Lys-260 via 'Lys-48'-linked polyubiquitination promotes its degradation. Deubiquitination at Lys-260 by USP29 promotes its stabilization. Deubiquitinated by USP27X, promoting its stabilization. Ubiquitinated at Lys-386 via 'Lys-63'-linked polyubiquitin chains by MARCHF8, leading to the inhibition of its DNA binding ability. In cycling cells, nucleosome-bound CGAS is ubiquitinated at Lys-396 and Lys-397 via 'Lys-48'-linked polyubiquitin chains by the ECS(SPSB3) complex, leading to its degradation: ubiquitination and degradation of nuclear CGAS during G1 and G2 phases is required to promote low intranuclear CGAS abundance before the next mitotic cycle. Sumoylated at Lys-206 by TRIM38 in uninfected cells and during the early phase of viral infection, promoting its stability by preventing ubiquitination at Lys-260 and subsequent degradation. Desumoylated by SENP2 during the late phase of viral infection. Sumoylation at Lys-322, Lys-359 and Lys-369 prevents DNA-binding, oligomerization and nucleotidyltransferase activity. Desumoylation at Lys-322, Lys-359 and Lys-369 by SENP7 relieves inhibition and activates CGAS. Post-translationally, polyglutamylated by TTLL6 at Glu-261, leading to impair DNA-binding activity. Deglutamylated by AGBL5/CCP5 and AGBL6/CCP6. In terms of processing, acetylation at Lys-359, Lys-369 and Lys-389 inhibits the cyclic GMP-AMP synthase activity. Deacetylated upon cytosolic DNA challenge such as viral infections. Acetylation by KAT5 increases the cyclic GMP-AMP synthase activity by promoting DNA-binding and subsequent activation. Proteolytically cleaved by apoptotic caspases during apoptosis, leading to its inactivation. The damage of the nucleus and the mitochondria during apoptosis leads to leakage of nuclear and mitochondrial DNA, which activate CGAS: cleavage and inactivation during apoptosis in required to prevent cytokine overproduction. Cleaved by CASP7 and CASP3 during virus-induced apoptosis, thereby inactivating it and preventing cytokine overproduction. Cleaved by CASP1 upon DNA virus infection; the cleavage impairs cGAMP production. Also cleaved by the pyroptotic CASP4 during non-canonical inflammasome activation; does not cut at the same sites than CASP1. Post-translationally, degraded via selective autophagy following interaction with IRGM. IRGM promotes CGAS recruitment to autophagosome membranes, promoting its SQSTM1/p62-dependent autophagic degradation. In terms of processing, poly-ADP-ribosylation at Glu-165 by PARP1 impairs DNA-binding, thereby preventing the cyclic GMP-AMP synthase activity. Palmitoylation at Cys-449 by ZDHHC18 impairs DNA-binding, thereby preventing the cyclic GMP-AMP synthase activity. Palmitoylation at Cys-379 and Cys-380 by ZDHHC9 promotes homodimerization and cyclic GMP-AMP synthase activity. Depalmitoylation at Cys-379 and Cys-380 by LYPLAL1 impairs homodimerization and cyclic GMP-AMP synthase activity. Post-translationally, monomethylated at Lys-481 by SETD7. Monomethylation promotes interaction with SGF29, preventing interaction between PARP1 nad SGF29. Demethylation by RIOX1 promotes interaction with PARP1, followed by PARP1 inactivation. In terms of processing, lactylation by AARS2 prevents ability to undergo liquid-liquid phase separation (LLPS), thereby inhibiting CGAS activation.

It localises to the nucleus. The protein localises to the chromosome. It is found in the cell membrane. The protein resides in the cytoplasm. Its subcellular location is the cytosol. The enzyme catalyses GTP + ATP = 2',3'-cGAMP + 2 diphosphate. It carries out the reaction GTP + ATP = pppGp(2'-5')A + diphosphate. The catalysed reaction is pppGp(2'-5')A = 2',3'-cGAMP + diphosphate. Its activity is regulated as follows. The enzyme activity is strongly increased by double-stranded DNA (dsDNA), but not by single-stranded DNA or RNA. DNA-binding induces the formation of liquid-like droplets in which CGAS is activated. Liquid-like droplets also create a selective environment that restricts entry of negative regulators, such as TREX1 or BANF1/BAF, allowing sensing of DNA. A number of mechanisms exist to restrict its activity toward self-DNA. The nucleotidyltransferase activity is inhibited in the nucleus via its association with nucleosomes: interacts with the acidic patch of histones H2A and H2B, thereby blocking DNA-binding and subsequent activation. CGAS is also inactive when associated with mitotic chromatin. Chromatin-bound CGAS cannot be activated by exogenous DNA in mitotic cells: phosphorylation of the N-terminal disordered part by AURKB during the G2-M transition blocks CGAS liquid phase separation and activation. Activity toward self-DNA is inhibited by BANF1/BAF upon acute loss of nuclear membrane integrity: BANF1/BAF acts by outcompeting CGAS for DNA-binding, thereby preventing CGAS activation. DNA-induced activation at micronuclei is also limited by TREX1, which degrades micronuclear DNA upon nuclear envelope rupture, thereby preventing CGAS activation. CGAS can be released from nucleosomes and activated by MRE11 component of the MRN complex, which displaces CGAS from acidic-patch-mediated sequestration. Acetylation at Lys-359, Lys-369 and Lys-389 inhibits the cyclic GMP-AMP synthase activity. Acetylation by KAT5 increases the cyclic GMP-AMP synthase activity by promoting DNA-binding and subsequent activation. Phosphorylation at Ser-278 suppresses the nucleotidyltransferase activity. Phosphorylation at Ser-410 promotes the cyclic GMP-AMP synthase activity. Phosphorylation at Ser-188 inhibits its cyclic GMP-AMP synthase activity. Ubiquitination at Lys-359 via 'Lys-27'-linked polyubiquitination enhances the cyclic GMP-AMP synthase activity. Monoubiquitination at Lys-322 promotes oligomerization and subsequent activation. Sumoylation at Lys-322, Lys-359 and Lys-369 prevents DNA-binding, oligomerization and nucleotidyltransferase activity. The enzyme activity is impaired by the cleavage by CASP1. In addition to DNA, also activated by collided ribosomes upon translation stress: specifically binds collided ribosomes, promoting its activation and triggering type-I interferon production. In terms of biological role, nucleotidyltransferase that catalyzes the formation of cyclic GMP-AMP (2',3'-cGAMP) from ATP and GTP and plays a key role in innate immunity. Catalysis involves both the formation of a 2',5' phosphodiester linkage at the GpA step and the formation of a 3',5' phosphodiester linkage at the ApG step, producing c[G(2',5')pA(3',5')p]. Acts as a key DNA sensor: directly binds double-stranded DNA (dsDNA), inducing the formation of liquid-like droplets in which CGAS is activated, leading to synthesis of 2',3'-cGAMP, a second messenger that binds to and activates STING1, thereby triggering type-I interferon production. Preferentially binds long dsDNA (around 45 bp) and forms ladder-like networks that function cooperatively to stabilize individual cGAS-dsDNA complexes. Acts as a key foreign DNA sensor, the presence of double-stranded DNA (dsDNA) in the cytoplasm being a danger signal that triggers the immune responses. Has antiviral activity by sensing the presence of dsDNA from DNA viruses in the cytoplasm. Also acts as an innate immune sensor of infection by retroviruses by detecting the presence of reverse-transcribed DNA in the cytosol. Detection of retroviral reverse-transcribed DNA in the cytosol may be indirect and be mediated via interaction with PQBP1, which directly binds reverse-transcribed retroviral DNA. Also detects the presence of DNA from bacteria. 2',3'-cGAMP can be transferred from producing cells to neighboring cells through gap junctions, leading to promote STING1 activation and convey immune response to connecting cells. 2',3'-cGAMP can also be transferred between cells by virtue of packaging within viral particles contributing to IFN-induction in newly infected cells in a cGAS-independent but STING1-dependent manner. Also senses the presence of neutrophil extracellular traps (NETs) that are translocated to the cytosol following phagocytosis, leading to synthesis of 2',3'-cGAMP. In addition to foreign DNA, can also be activated by endogenous nuclear or mitochondrial DNA. When self-DNA leaks into the cytosol during cellular stress (such as mitochondrial stress, DNA damage, mitotic arrest or senescence), or is present in form of cytosolic micronuclei, CGAS is activated leading to a state of sterile inflammation. Acts as a regulator of cellular senescence by binding to cytosolic chromatin fragments that are present in senescent cells, leading to trigger type-I interferon production via STING1 and promote cellular senescence. Also involved in the inflammatory response to genome instability and double-stranded DNA breaks: acts by localizing to micronuclei arising from genome instability. Micronuclei, which are frequently found in cancer cells, consist of chromatin surrounded by their own nuclear membrane: following breakdown of the micronuclear envelope, a process associated with chromothripsis, CGAS binds self-DNA exposed to the cytosol, leading to 2',3'-cGAMP synthesis and subsequent activation of STING1 and type-I interferon production. In a healthy cell, CGAS is however kept inactive even in cellular events that directly expose it to self-DNA, such as mitosis, when cGAS associates with chromatin directly after nuclear envelope breakdown or remains in the form of postmitotic persistent nuclear cGAS pools bound to chromatin. Nuclear CGAS is inactivated by chromatin via direct interaction with nucleosomes, which block CGAS from DNA binding and thus prevent CGAS-induced autoimmunity. Also acts as a suppressor of DNA repair in response to DNA damage: inhibits homologous recombination repair by interacting with PARP1, the CGAS-PARP1 interaction leading to impede the formation of the PARP1-TIMELESS complex. In addition to DNA, also sense translation stress: in response to translation stress, translocates to the cytosol and associates with collided ribosomes, promoting its activation and triggering type-I interferon production. In Sus scrofa (Pig), this protein is Cyclic GMP-AMP synthase.